A 282-amino-acid chain; its full sequence is Shikimate dehydrogenase (NADP(+)) (282 aa).

Residues 18-20 (SRS) and T65 each bind shikimate. K69 functions as the Proton acceptor in the catalytic mechanism. Residue E81 participates in NADP(+) binding. Residues N90 and D105 each coordinate shikimate. NADP(+) contacts are provided by residues 130-134 (GAGGA), 154-159 (NRTPAR), and M222. Y224 is a shikimate binding site. G245 contacts NADP(+).

This sequence belongs to the shikimate dehydrogenase family. Homodimer.

It carries out the reaction shikimate + NADP(+) = 3-dehydroshikimate + NADPH + H(+). The protein operates within metabolic intermediate biosynthesis; chorismate biosynthesis; chorismate from D-erythrose 4-phosphate and phosphoenolpyruvate: step 4/7. Functionally, involved in the biosynthesis of the chorismate, which leads to the biosynthesis of aromatic amino acids. Catalyzes the reversible NADPH linked reduction of 3-dehydroshikimate (DHSA) to yield shikimate (SA). This chain is Shikimate dehydrogenase (NADP(+)), found in Acidovorax sp. (strain JS42).